The sequence spans 181 residues: Protein GrpE (181 aa).

Residues 1–24 (MSEENIGENEVETPETEPSAEAEV) show a composition bias toward acidic residues. A disordered region spans residues 1 to 26 (MSEENIGENEVETPETEPSAEAEVES).

The protein belongs to the GrpE family. In terms of assembly, homodimer.

The protein localises to the cytoplasm. In terms of biological role, participates actively in the response to hyperosmotic and heat shock by preventing the aggregation of stress-denatured proteins, in association with DnaK and GrpE. It is the nucleotide exchange factor for DnaK and may function as a thermosensor. Unfolded proteins bind initially to DnaJ; upon interaction with the DnaJ-bound protein, DnaK hydrolyzes its bound ATP, resulting in the formation of a stable complex. GrpE releases ADP from DnaK; ATP binding to DnaK triggers the release of the substrate protein, thus completing the reaction cycle. Several rounds of ATP-dependent interactions between DnaJ, DnaK and GrpE are required for fully efficient folding. This Rhizorhabdus wittichii (strain DSM 6014 / CCUG 31198 / JCM 15750 / NBRC 105917 / EY 4224 / RW1) (Sphingomonas wittichii) protein is Protein GrpE.